The chain runs to 139 residues: MRHYEIVFLVHPDQSEQVGGMVERYTKAIEEDGGKIHRLEDWGRRQLAYAINNVHKAHYVLMNVECSAKALAELEDNFRYNDAVIRNLVMRRDEAVTEQSEMLKAEESRNERRERRERPNDNAEGADGDDNSDSDNADE.

Basic and acidic residues predominate over residues alanine 95 to aspartate 121. Residues alanine 95–glutamate 139 form a disordered region. Residues glutamate 124 to glutamate 139 are compositionally biased toward acidic residues.

This sequence belongs to the bacterial ribosomal protein bS6 family.

Functionally, binds together with bS18 to 16S ribosomal RNA. The chain is Small ribosomal subunit protein bS6 from Pseudomonas aeruginosa (strain LESB58).